A 253-amino-acid polypeptide reads, in one-letter code: uncharacterized protein (253 aa).

An N-terminal signal peptide occupies residues 1-16 (MCVVYRTSVLILLASG). Residue cysteine 17 is the site of N-palmitoyl cysteine attachment. A lipid anchor (S-diacylglycerol cysteine) is attached at cysteine 17.

The protein belongs to the staphylococcal tandem lipoprotein family.

The protein resides in the cell membrane. This is an uncharacterized protein from Staphylococcus aureus (strain N315).